A 261-amino-acid polypeptide reads, in one-letter code: Putative outer membrane protein CT_371 (261 aa).

Positions 1–18 are cleaved as a signal peptide; the sequence is MRLCFILFLLLSPLISEA.

The protein localises to the cell outer membrane. The polypeptide is Putative outer membrane protein CT_371 (Chlamydia trachomatis serovar D (strain ATCC VR-885 / DSM 19411 / UW-3/Cx)).